We begin with the raw amino-acid sequence, 68 residues long: uncharacterized protein (68 aa).

This is an uncharacterized protein from Salmonella typhi.